A 200-amino-acid polypeptide reads, in one-letter code: Large ribosomal subunit protein uL4 (200 aa).

A disordered region spans residues 42–65; sequence TRAQKTRSEVSGGGAKPWRQKGTG.

This sequence belongs to the universal ribosomal protein uL4 family. In terms of assembly, part of the 50S ribosomal subunit.

In terms of biological role, one of the primary rRNA binding proteins, this protein initially binds near the 5'-end of the 23S rRNA. It is important during the early stages of 50S assembly. It makes multiple contacts with different domains of the 23S rRNA in the assembled 50S subunit and ribosome. Functionally, forms part of the polypeptide exit tunnel. The chain is Large ribosomal subunit protein uL4 from Vibrio cholerae serotype O1 (strain ATCC 39541 / Classical Ogawa 395 / O395).